A 614-amino-acid polypeptide reads, in one-letter code: DNA mismatch repair protein MutL (614 aa).

It belongs to the DNA mismatch repair MutL/HexB family.

Functionally, this protein is involved in the repair of mismatches in DNA. It is required for dam-dependent methyl-directed DNA mismatch repair. May act as a 'molecular matchmaker', a protein that promotes the formation of a stable complex between two or more DNA-binding proteins in an ATP-dependent manner without itself being part of a final effector complex. The chain is DNA mismatch repair protein MutL from Thermoanaerobacter sp. (strain X514).